Consider the following 392-residue polypeptide: LL-diaminopimelate aminotransferase (392 aa).

5 residues coordinate substrate: Tyr-15, Gly-40, Lys-104, Tyr-128, and Asn-178. Pyridoxal 5'-phosphate contacts are provided by residues 103–104, Tyr-128, Asn-178, Tyr-209, and 237–239; these read SK and SVS. The residue at position 240 (Lys-240) is an N6-(pyridoxal phosphate)lysine. Arg-248 contributes to the pyridoxal 5'-phosphate binding site. Arg-366 contributes to the substrate binding site.

It belongs to the class-I pyridoxal-phosphate-dependent aminotransferase family. LL-diaminopimelate aminotransferase subfamily. In terms of assembly, homodimer. The cofactor is pyridoxal 5'-phosphate.

It catalyses the reaction (2S,6S)-2,6-diaminopimelate + 2-oxoglutarate = (S)-2,3,4,5-tetrahydrodipicolinate + L-glutamate + H2O + H(+). Its pathway is amino-acid biosynthesis; L-lysine biosynthesis via DAP pathway; LL-2,6-diaminopimelate from (S)-tetrahydrodipicolinate (aminotransferase route): step 1/1. Its function is as follows. Involved in the synthesis of meso-diaminopimelate (m-DAP or DL-DAP), required for both lysine and peptidoglycan biosynthesis. Catalyzes the direct conversion of tetrahydrodipicolinate to LL-diaminopimelate. In Desulforudis audaxviator (strain MP104C), this protein is LL-diaminopimelate aminotransferase.